The primary structure comprises 222 residues: Sugar fermentation stimulation protein homolog (222 aa).

It belongs to the SfsA family.

This Thermoplasma acidophilum (strain ATCC 25905 / DSM 1728 / JCM 9062 / NBRC 15155 / AMRC-C165) protein is Sugar fermentation stimulation protein homolog.